Reading from the N-terminus, the 927-residue chain is Autophagy-related protein 13 (927 aa).

Disordered stretches follow at residues 1-66 (MHQQ…PPAD), 334-359 (SLPQQHATSRAPAAEAGSLRDHRSKP), 388-559 (LRSV…AQPG), 628-716 (TESM…TIRE), and 786-927 (QMQL…RRGW). Over residues 14–30 (PGATTQPNLPSRSNSTR) the composition is skewed to polar residues. Composition is skewed to polar residues over residues 393-402 (QPGSDTSSPP), 513-523 (PASTSRYSSSF), and 544-557 (GSSGRQSLASSVAQ). The segment covering 630–671 (SMTSSVQMQRSSSSSSRQLTSVPGMTAPASVSASSSPGKPLS) has biased composition (low complexity). A compositionally biased stretch (polar residues) spans 684–716 (LSENSIIDYSGQGRITSRQGRTSDNTQPGTIRE). Residues 793–803 (STQRPSDRLEP) show a composition bias toward basic and acidic residues. Over residues 850–868 (HKQTPPQSSRGSFNGSLNR) the composition is skewed to polar residues. Positions 891-901 (PQGRRSIEEAR) are enriched in basic and acidic residues.

It belongs to the ATG13 family. Fungi subfamily. As to quaternary structure, hypophosphorylated form interacts with ATG1 to form the ATG1-ATG13 kinase complex. The ATG1-ATG13 complex interacts with the ATG17-ATG29-ATG31 complex through direct interaction with ATG17.

It is found in the cytoplasm. The protein localises to the preautophagosomal structure. Functionally, activates the ATG1 kinase in a nutritional condition dependent manner through the TOR pathway, leading to autophagy. Involved in ATG9 and ATG23 cycling through the pre-autophagosomal structure. Also involved in cytoplasm to vacuole transport (Cvt) and more specifically in Cvt vesicle formation. Seems to play a role in the switching machinery regulating the conversion between the Cvt pathway and autophagy. Finally, ATG13 is also required for glycogen storage during stationary phase. Autophagy is required for proper vegetative growth, asexual/sexual reproduction, and full virulence. Autophagy is particularly involved in the biosynthesis of deoxynivalenol (DON), an important virulence determinant. The chain is Autophagy-related protein 13 from Gibberella zeae (strain ATCC MYA-4620 / CBS 123657 / FGSC 9075 / NRRL 31084 / PH-1) (Wheat head blight fungus).